Reading from the N-terminus, the 182-residue chain is Ribosome maturation factor RimM (182 aa).

The PRC barrel domain occupies 103–182 (EDEFYWRELF…RIEVDWDPGF (80 aa)).

Belongs to the RimM family. In terms of assembly, binds ribosomal protein uS19.

It is found in the cytoplasm. Its function is as follows. An accessory protein needed during the final step in the assembly of 30S ribosomal subunit, possibly for assembly of the head region. Essential for efficient processing of 16S rRNA. May be needed both before and after RbfA during the maturation of 16S rRNA. It has affinity for free ribosomal 30S subunits but not for 70S ribosomes. The sequence is that of Ribosome maturation factor RimM from Vibrio parahaemolyticus serotype O3:K6 (strain RIMD 2210633).